Consider the following 593-residue polypeptide: Mitosis inducer protein kinase cdr1 (593 aa).

The region spanning 12-258 (WRLGKTLGTG…IPEVFSHPFL (247 aa)) is the Protein kinase domain. ATP is bound by residues 18–26 (LGTGSTSCV) and lysine 41. Aspartate 128 serves as the catalytic Proton acceptor. A Phosphoserine modification is found at serine 550.

It belongs to the protein kinase superfamily. CAMK Ser/Thr protein kinase family. NIM1 subfamily. Interacts with msp1.

The catalysed reaction is L-seryl-[protein] + ATP = O-phospho-L-seryl-[protein] + ADP + H(+). The enzyme catalyses L-threonyl-[protein] + ATP = O-phospho-L-threonyl-[protein] + ADP + H(+). Functionally, this protein, a dose-dependent mitotic inducer, appears to function as a negative regulator of mitosis inhibitor wee1 by phosphorylating and inactivating it. In Schizosaccharomyces pombe (strain 972 / ATCC 24843) (Fission yeast), this protein is Mitosis inducer protein kinase cdr1 (cdr1).